A 349-amino-acid polypeptide reads, in one-letter code: Kelch domain-containing protein 9 (349 aa).

3 Kelch repeats span residues 39 to 89 (RFYL…PVDG), 91 to 137 (WLCV…SHTC), and 325 to 349 (QLYLVGGFGEDGRTASPQVCILDFI).

In terms of assembly, interacts with CCNA1.

The protein is Kelch domain-containing protein 9 (KLHDC9) of Homo sapiens (Human).